The following is a 535-amino-acid chain: CTP synthase (535 aa).

Residues 300–535 (RIGIVGKYAP…LVSASYERSK (236 aa)) enclose the Glutamine amidotransferase type-1 domain. Residues Cys385, His509, and Glu511 each act as for GATase activity in the active site.

Belongs to the CTP synthase family.

It catalyses the reaction UTP + L-glutamine + ATP + H2O = CTP + L-glutamate + ADP + phosphate + 2 H(+). It functions in the pathway pyrimidine metabolism; CTP biosynthesis via de novo pathway; CTP from UDP: step 2/2. Functionally, catalyzes the ATP-dependent amination of UTP to CTP with either L-glutamine or ammonia as the source of nitrogen. The chain is CTP synthase from Encephalitozoon cuniculi (strain GB-M1) (Microsporidian parasite).